Consider the following 306-residue polypeptide: Acetylglutamate kinase (306 aa).

Substrate contacts are provided by residues 75-76, Arg97, and Asn197; that span reads GG.

The protein belongs to the acetylglutamate kinase family. ArgB subfamily.

The protein localises to the cytoplasm. The enzyme catalyses N-acetyl-L-glutamate + ATP = N-acetyl-L-glutamyl 5-phosphate + ADP. It participates in amino-acid biosynthesis; L-arginine biosynthesis; N(2)-acetyl-L-ornithine from L-glutamate: step 2/4. Functionally, catalyzes the ATP-dependent phosphorylation of N-acetyl-L-glutamate. The chain is Acetylglutamate kinase from Streptomyces coelicolor (strain ATCC BAA-471 / A3(2) / M145).